Reading from the N-terminus, the 333-residue chain is Ketol-acid reductoisomerase (NADP(+)) (333 aa).

The KARI N-terminal Rossmann domain occupies 1-179 (MFYDDDADLT…GGTRAGVIKT (179 aa)). NADP(+) contacts are provided by residues 22–25 (YGSQ), Lys-45, Ser-48, Ser-50, and 80–83 (DTAQ). The active site involves His-105. An NADP(+)-binding site is contributed by Gly-131. The region spanning 180-325 (TFKDETETDL…KRLRDLMSWV (146 aa)) is the KARI C-terminal knotted domain. Positions 188, 192, 224, and 228 each coordinate Mg(2+). Ser-249 provides a ligand contact to substrate.

The protein belongs to the ketol-acid reductoisomerase family. Mg(2+) serves as cofactor.

It carries out the reaction (2R)-2,3-dihydroxy-3-methylbutanoate + NADP(+) = (2S)-2-acetolactate + NADPH + H(+). The enzyme catalyses (2R,3R)-2,3-dihydroxy-3-methylpentanoate + NADP(+) = (S)-2-ethyl-2-hydroxy-3-oxobutanoate + NADPH + H(+). It participates in amino-acid biosynthesis; L-isoleucine biosynthesis; L-isoleucine from 2-oxobutanoate: step 2/4. The protein operates within amino-acid biosynthesis; L-valine biosynthesis; L-valine from pyruvate: step 2/4. Functionally, involved in the biosynthesis of branched-chain amino acids (BCAA). Catalyzes an alkyl-migration followed by a ketol-acid reduction of (S)-2-acetolactate (S2AL) to yield (R)-2,3-dihydroxy-isovalerate. In the isomerase reaction, S2AL is rearranged via a Mg-dependent methyl migration to produce 3-hydroxy-3-methyl-2-ketobutyrate (HMKB). In the reductase reaction, this 2-ketoacid undergoes a metal-dependent reduction by NADPH to yield (R)-2,3-dihydroxy-isovalerate. The protein is Ketol-acid reductoisomerase (NADP(+)) of Mycobacterium avium.